The chain runs to 256 residues: Leucyl/phenylalanyl-tRNA--protein transferase (256 aa).

It belongs to the L/F-transferase family.

The protein localises to the cytoplasm. The enzyme catalyses N-terminal L-lysyl-[protein] + L-leucyl-tRNA(Leu) = N-terminal L-leucyl-L-lysyl-[protein] + tRNA(Leu) + H(+). It catalyses the reaction N-terminal L-arginyl-[protein] + L-leucyl-tRNA(Leu) = N-terminal L-leucyl-L-arginyl-[protein] + tRNA(Leu) + H(+). The catalysed reaction is L-phenylalanyl-tRNA(Phe) + an N-terminal L-alpha-aminoacyl-[protein] = an N-terminal L-phenylalanyl-L-alpha-aminoacyl-[protein] + tRNA(Phe). Its function is as follows. Functions in the N-end rule pathway of protein degradation where it conjugates Leu, Phe and, less efficiently, Met from aminoacyl-tRNAs to the N-termini of proteins containing an N-terminal arginine or lysine. In Hydrogenovibrio crunogenus (strain DSM 25203 / XCL-2) (Thiomicrospira crunogena), this protein is Leucyl/phenylalanyl-tRNA--protein transferase.